The following is a 209-amino-acid chain: Large ribosomal subunit protein uL1 (209 aa).

This sequence belongs to the universal ribosomal protein uL1 family. In terms of assembly, part of the 50S ribosomal subunit.

In terms of biological role, binds directly to 23S rRNA. The L1 stalk is quite mobile in the ribosome, and is involved in E site tRNA release. Protein L1 is also a translational repressor protein, it controls the translation of the L11 operon by binding to its mRNA. The sequence is that of Large ribosomal subunit protein uL1 (rplA) from Neorickettsia sennetsu (strain ATCC VR-367 / Miyayama) (Ehrlichia sennetsu).